The sequence spans 419 residues: N-acylglucosamine 2-epimerase (419 aa).

The segment at 185 to 206 is leucine-zipper; the sequence is LLNLVEQLGEEDEEMTDKYAEL. Ser-418 is subject to Phosphoserine.

It belongs to the N-acylglucosamine 2-epimerase family. Homodimer. Forms a heterodimer with renin and inhibits its activity. Kidney, adrenal gland, brain, lung, spleen, ovary, testis and heart.

The catalysed reaction is an N-acyl-D-glucosamine = an N-acyl-D-mannosamine. It participates in amino-sugar metabolism; N-acetylneuraminate degradation. In terms of biological role, catalyzes the interconversion of N-acetylglucosamine to N-acetylmannosamine. Involved in the N-glycolylneuraminic acid (Neu5Gc) degradation pathway. The polypeptide is N-acylglucosamine 2-epimerase (Renbp) (Rattus norvegicus (Rat)).